The primary structure comprises 139 residues: Probable transcription termination protein NusA (139 aa).

One can recognise a KH domain in the interval 31–97 (DDRVVYVVTA…YNVTVSENDT (67 aa)).

Belongs to the NusA family.

The protein localises to the cytoplasm. Its function is as follows. Participates in transcription termination. This chain is Probable transcription termination protein NusA, found in Halobacterium salinarum (strain ATCC 29341 / DSM 671 / R1).